A 143-amino-acid chain; its full sequence is Probable FAD-linked sulfhydryl oxidase R368 (143 aa).

Residues 10–104 form the ERV/ALR sulfhydryl oxidase domain; sequence GWTFSHAVAL…YPEAIEAIEK (95 aa). A disulfide bond links Cys-46 and Cys-49. A helical membrane pass occupies residues 117–137; the sequence is FFIILIIIGIIVIIYLMYIVF.

FAD serves as cofactor.

The protein localises to the membrane. It catalyses the reaction 2 R'C(R)SH + O2 = R'C(R)S-S(R)CR' + H2O2. In terms of biological role, FAD-dependent sulfhydryl oxidase that catalyzes disulfide bond formation. The protein is Probable FAD-linked sulfhydryl oxidase R368 of Acanthamoeba polyphaga mimivirus (APMV).